Consider the following 400-residue polypeptide: MQELGITGQGSVRVTRKEGNVVVLEKDLATEQMVLAMGPQHPSTHGVLKLECFTDGEVVTHAEPYLGYLHRCFEKHCEVVDYPGIVPYTDRMDYLAGMNSEWAYCLAVEKLLDLELPRRVEFIRVIVSELNRIASHLVAIGTYAIDLGAFTPFLFCFRDREHILSLLEWASGARMLYNYIWIGGLAYDVPADFNKRVKEFVDYFRPKAVELYQLLTENEIFVKRTKGIGIMPADVAINYGWSGPMLRGSGVQWDLRRNDPYSVYPELDFKVPIPDGKFSDVGDCLSRHLVRALEMDESLSIIEQCIDKMPGSEGFNPRAAVPKRVRAKAGEVYCRAENPRGELGFYIQSDGKSTKPLRCKARSSCFVNLSAMKDLSKGQLIPDLVAIIGSIDIVLGEVDR.

The protein belongs to the complex I 49 kDa subunit family. NDH-1 is composed of 14 different subunits. Subunits NuoB, C, D, E, F, and G constitute the peripheral sector of the complex.

It is found in the cell inner membrane. The enzyme catalyses a quinone + NADH + 5 H(+)(in) = a quinol + NAD(+) + 4 H(+)(out). Functionally, NDH-1 shuttles electrons from NADH, via FMN and iron-sulfur (Fe-S) centers, to quinones in the respiratory chain. The immediate electron acceptor for the enzyme in this species is believed to be a menaquinone. Couples the redox reaction to proton translocation (for every two electrons transferred, four hydrogen ions are translocated across the cytoplasmic membrane), and thus conserves the redox energy in a proton gradient. The protein is NADH-quinone oxidoreductase subunit D of Chlorobium phaeobacteroides (strain DSM 266 / SMG 266 / 2430).